Consider the following 163-residue polypeptide: UPF0523 protein B (163 aa).

Belongs to the UPF0523 family.

This chain is UPF0523 protein B, found in Dictyostelium discoideum (Social amoeba).